Reading from the N-terminus, the 716-residue chain is ATP-dependent DNA helicase DinG (716 aa).

Positions 17-294 (ALQEQIPDFI…TCMEQFRPKT (278 aa)) constitute a Helicase ATP-binding domain. Residue 54–61 (APTGVGKT) coordinates ATP. Cys-120 provides a ligand contact to [4Fe-4S] cluster. Residues 131-134 (EPTQ) carry the DEAH box motif. 3 residues coordinate [4Fe-4S] cluster: Cys-194, Cys-199, and Cys-205. The DEAH box signature appears at 248-251 (DEGH). The Helicase C-terminal domain occupies 487-698 (ALDSPFNHCE…VFPIEQPEVP (212 aa)).

The protein belongs to the helicase family. DinG subfamily. Type 1 sub-subfamily. It depends on [4Fe-4S] cluster as a cofactor.

It catalyses the reaction Couples ATP hydrolysis with the unwinding of duplex DNA at the replication fork by translocating in the 5'-3' direction. This creates two antiparallel DNA single strands (ssDNA). The leading ssDNA polymer is the template for DNA polymerase III holoenzyme which synthesizes a continuous strand.. The catalysed reaction is ATP + H2O = ADP + phosphate + H(+). In terms of biological role, DNA-dependent ATPase and 5'-3' DNA helicase. Unwinds D-loops, R-loops, forked DNA and G-quadruplex DNA. The chain is ATP-dependent DNA helicase DinG from Shigella flexneri.